Reading from the N-terminus, the 251-residue chain is Pyrroloquinoline-quinone synthase (251 aa).

It belongs to the PqqC family.

The catalysed reaction is 6-(2-amino-2-carboxyethyl)-7,8-dioxo-1,2,3,4,7,8-hexahydroquinoline-2,4-dicarboxylate + 3 O2 = pyrroloquinoline quinone + 2 H2O2 + 2 H2O + H(+). The protein operates within cofactor biosynthesis; pyrroloquinoline quinone biosynthesis. In terms of biological role, ring cyclization and eight-electron oxidation of 3a-(2-amino-2-carboxyethyl)-4,5-dioxo-4,5,6,7,8,9-hexahydroquinoline-7,9-dicarboxylic-acid to PQQ. In Klebsiella pneumoniae subsp. pneumoniae (strain ATCC 700721 / MGH 78578), this protein is Pyrroloquinoline-quinone synthase.